The sequence spans 469 residues: Programmed cell death protein 4 (469 aa).

Met-1 is modified (N-acetylmethionine). 2 disordered regions span residues Met-1–Asn-38 and Lys-58–Gly-128. A Phosphoserine modification is found at Ser-25. Positions Lys-58–Arg-64 match the Nuclear localization signal motif. Position 67 is a phosphoserine; by PKB and RPS6KB1 (Ser-67). Residues Ser-68, Ser-71, Ser-76, and Ser-78 each carry the phosphoserine modification. Positions Asp-70–Ser-76 match the Phosphodegron motif. Residues Gly-74–Asp-83 are compositionally biased toward low complexity. Polar residues predominate over residues Thr-84 to Thr-93. Ser-94 is modified (phosphoserine). Residues Lys-114–Gly-125 show a composition bias toward gly residues. Position 152 is a phosphotyrosine (Tyr-152). In terms of domain architecture, MI 1 spans Ala-163 to Gly-284. Phosphoserine is present on residues Ser-313 and Ser-317. The MI 2 domain occupies His-326–Ser-449. The Nuclear localization signal motif lies at Pro-448–Arg-454. Ser-457 bears the Phosphoserine; by PKB mark.

The protein belongs to the PDCD4 family. In terms of assembly, interacts (via MI domains) with EIF4A2. Interacts (via MI domains) with EIF4A1 (via N-terminal domain). Heterotrimer with EIF4A1; one molecule of PDCD4 binds two molecules of EIF4A1. Interacts with EIF4G1. May form a complex with EIF4A1 and EIF4G1. The interaction between PDCD4 and EIF4A1 interferes with the interaction between EIF4A1 and EIF4G. When phosphorylated, interacts with BTRC and FBXW11. In terms of processing, polyubiquitinated, leading to its proteasomal degradation. Rapidly degraded in response to mitogens. Phosphorylation of the phosphodegron promotes interaction with BTRC and proteasomal degradation. Post-translationally, phosphorylated at Ser-67 by RPS6KB1 in response to mitogens; phosphorylation promotes proteasomal degradation of PDCD4.

Its subcellular location is the nucleus. The protein resides in the cytoplasm. Inhibits translation initiation and cap-dependent translation. May excert its function by hindering the interaction between EIF4A1 and EIF4G. Inhibits the helicase activity of EIF4A. Modulates the activation of JUN kinase. Down-regulates the expression of MAP4K1, thus inhibiting events important in driving invasion, namely, MAPK85 activation and consequent JUN-dependent transcription. May play a role in apoptosis. Tumor suppressor. Inhibits tumor promoter-induced neoplastic transformation. Binds RNA. The chain is Programmed cell death protein 4 (PDCD4) from Pongo abelii (Sumatran orangutan).